Here is a 354-residue protein sequence, read N- to C-terminus: Ferredoxin--NADP reductase 2 (354 aa).

8 residues coordinate FAD: Thr-14, Asp-33, Gln-41, Tyr-46, Ala-86, Phe-121, Asp-289, and Thr-330.

This sequence belongs to the ferredoxin--NADP reductase type 2 family. Homodimer. It depends on FAD as a cofactor.

It carries out the reaction 2 reduced [2Fe-2S]-[ferredoxin] + NADP(+) + H(+) = 2 oxidized [2Fe-2S]-[ferredoxin] + NADPH. In Christiangramia forsetii (strain DSM 17595 / CGMCC 1.15422 / KT0803) (Gramella forsetii), this protein is Ferredoxin--NADP reductase 2.